Consider the following 377-residue polypeptide: DNA replication and repair protein RecF (377 aa).

Position 30–37 (30–37) interacts with ATP; it reads GPNGVGKT.

Belongs to the RecF family.

The protein resides in the cytoplasm. The RecF protein is involved in DNA metabolism; it is required for DNA replication and normal SOS inducibility. RecF binds preferentially to single-stranded, linear DNA. It also seems to bind ATP. The sequence is that of DNA replication and repair protein RecF from Salinispora tropica (strain ATCC BAA-916 / DSM 44818 / JCM 13857 / NBRC 105044 / CNB-440).